A 351-amino-acid polypeptide reads, in one-letter code: ATP-dependent 6-phosphofructokinase subunit gamma (351 aa).

In terms of assembly, heterododecamer of 4 alpha, 4 beta and 4 gamma chains. The gamma chain bridges the N-terminal halves of the alpha and beta subunits.

Its subcellular location is the cytoplasm. It functions in the pathway carbohydrate degradation; glycolysis; D-glyceraldehyde 3-phosphate and glycerone phosphate from D-glucose: step 3/4. Its function is as follows. Structural subunit of pyrophosphate--fructose 6-phosphate 1-phosphotransferase. Not required for catalytic activity. Fine-tunes allosteric regulation of the ATP-PFK by ATP, fructose 2,6-bisphosphate and AMP. The protein is ATP-dependent 6-phosphofructokinase subunit gamma (PFK3) of Komagataella pastoris (Yeast).